The sequence spans 487 residues: Serine carboxypeptidase-like 38 (487 aa).

A signal peptide spans 1 to 20 (MGKQQDWSVTACIFLSLSLA). Intrachain disulfides connect Cys119–Cys368, Cys280–Cys290, and Cys315–Cys336. Ser215 is an active-site residue. N-linked (GlcNAc...) asparagine glycosylation is present at Asn233. N-linked (GlcNAc...) asparagine glycosylation is found at Asn317 and Asn357. Residue Asp407 is part of the active site. N-linked (GlcNAc...) asparagine glycans are attached at residues Asn423 and Asn449. His460 is an active-site residue.

This sequence belongs to the peptidase S10 family. In terms of tissue distribution, expressed in seedlings, roots, leaves, flowers and siliques.

The protein resides in the secreted. In terms of biological role, probable carboxypeptidase. The sequence is that of Serine carboxypeptidase-like 38 (SCPL38) from Arabidopsis thaliana (Mouse-ear cress).